The chain runs to 970 residues: m7GpppN-mRNA hydrolase (970 aa).

Residues 101 to 228 enclose the Nudix hydrolase domain; sequence KSIPVRGAAI…IKYYLINSMM (128 aa). Residue serine 116 is modified to Phosphoserine. Positions 134–155 match the Nudix box motif; it reads GKISKDENDIDCCIREVKEEIG. Positions 149 and 153 each coordinate Mn(2+). Basic and acidic residues predominate over residues 302 to 314; it reads QHLKEQSGEHNQQ. 4 disordered regions span residues 302 to 341, 417 to 465, 501 to 520, and 528 to 692; these read QHLK…ANNK, AVSQ…PKLK, SSQK…NDSV, and YEDF…LSST. Over residues 315-334 the composition is skewed to low complexity; sequence KDQQSSFSSQQQPSIFPSLS. Serine 439 is subject to Phosphoserine. A compositionally biased stretch (acidic residues) spans 528-539; it reads YEDFESSSDEEV. The span at 560–576 shows a compositional bias: basic and acidic residues; sequence SEKDSRRSQKEKPRNDA. The segment covering 577-590 has biased composition (polar residues); the sequence is SKTNLNASAESNSV. The segment covering 596-608 has biased composition (low complexity); it reads KSSPSTQSKQNSS. Over residues 625–637 the composition is skewed to acidic residues; that stretch reads DAYEVFESSSDEE. Threonine 677 is subject to Phosphothreonine. Polar residues predominate over residues 677-691; sequence TESNKSINETVGLSS. Serine 679, serine 682, serine 751, serine 771, serine 773, and serine 778 each carry phosphoserine. Residues 831 to 867 form a disordered region; it reads LKKNDSTGYPRTEGGPSSEMSTSMKRNDATNNQELDK. Residues 848-863 are compositionally biased toward polar residues; the sequence is SEMSTSMKRNDATNNQ.

The protein belongs to the Nudix hydrolase family. DCP2 subfamily. In terms of assembly, component of the decapping complex composed of DCP1 and DCP2. Interacts with mRNA, LSM2, LSM4 and LSM8. Interacts with EDC3. It depends on Mn(2+) as a cofactor.

It is found in the cytoplasm. It localises to the P-body. It carries out the reaction a 5'-end (N(7)-methyl 5'-triphosphoguanosine)-ribonucleoside in mRNA + H2O = N(7)-methyl-GDP + a 5'-end phospho-ribonucleoside in mRNA + 2 H(+). Catalytic component of the decapping complex necessary for the degradation of mRNAs, both in normal mRNA turnover and in nonsense-mediated mRNA decay. Removes the 7-methyl guanine cap structure from mRNA molecules, yielding a 5'-phosphorylated mRNA fragment and 7m-GDP. Decapping is the major pathway of mRNA degradation in yeast and occurs through deadenylation, decapping and subsequent 5' to 3' exonucleolytic decay of the transcript body. Blocks autophagy in nutrient-rich conditions by repressing the expression of ATG-related genes through degradation of their transcripts. The sequence is that of m7GpppN-mRNA hydrolase from Saccharomyces cerevisiae (strain ATCC 204508 / S288c) (Baker's yeast).